A 170-amino-acid polypeptide reads, in one-letter code: ATP synthase subunit b (170 aa).

The chain crosses the membrane as a helical span at residues 30–50 (FFFVLAIFLVVLGVIGTFVVP).

It belongs to the ATPase B chain family. As to quaternary structure, F-type ATPases have 2 components, F(1) - the catalytic core - and F(0) - the membrane proton channel. F(1) has five subunits: alpha(3), beta(3), gamma(1), delta(1), epsilon(1). F(0) has three main subunits: a(1), b(2) and c(10-14). The alpha and beta chains form an alternating ring which encloses part of the gamma chain. F(1) is attached to F(0) by a central stalk formed by the gamma and epsilon chains, while a peripheral stalk is formed by the delta and b chains.

The protein localises to the cell membrane. Functionally, f(1)F(0) ATP synthase produces ATP from ADP in the presence of a proton or sodium gradient. F-type ATPases consist of two structural domains, F(1) containing the extramembraneous catalytic core and F(0) containing the membrane proton channel, linked together by a central stalk and a peripheral stalk. During catalysis, ATP synthesis in the catalytic domain of F(1) is coupled via a rotary mechanism of the central stalk subunits to proton translocation. Its function is as follows. Component of the F(0) channel, it forms part of the peripheral stalk, linking F(1) to F(0). This is ATP synthase subunit b from Mycobacterium leprae (strain TN).